The primary structure comprises 227 residues: Lectin (227 aa).

The first 28 residues, 1–28 (MTMTSTTTKAMAMAAAVLAAAAVAATNA), serve as a signal peptide directing secretion. Residue Gln-29 is modified to Pyrrolidone carboxylic acid. Chitin-binding type-1 domains lie at 29 to 70 (QTCG…ACCS), 71 to 113 (SQRC…PCRA), 114 to 156 (DIKC…ACCP), and 157 to 199 (EKRC…GCYK). Disulfide bonds link Cys-31/Cys-46, Cys-40/Cys-52, Cys-45/Cys-59, Cys-63/Cys-68, Cys-74/Cys-89, Cys-83/Cys-95, Cys-88/Cys-102, Cys-106/Cys-111, Cys-117/Cys-132, Cys-126/Cys-138, Cys-131/Cys-145, Cys-149/Cys-154, Cys-160/Cys-175, Cys-169/Cys-181, Cys-174/Cys-188, and Cys-192/Cys-197. A substrate-binding site is contributed by 38–40 (MIC). A substrate-binding site is contributed by 90–101 (SQYGYCGFGSEY). 142 to 143 (SE) provides a ligand contact to substrate. The propeptide occupies 202-227 (DGMAAILANNQSVSFEGIIESVAELV). Residue Asn-211 is glycosylated (N-linked (GlcNAc...) asparagine).

As to expression, confined to root caps, several cell layers at the periphery of the coleorhiza and radicle, and in all cell layers of the coleoptile.

In terms of biological role, N-acetyl-D-glucosamine binding lectin. The chain is Lectin from Oryza sativa subsp. japonica (Rice).